Reading from the N-terminus, the 214-residue chain is Zinc finger protein 11 (214 aa).

The segment at 1 to 27 (MKRTHLASFSNRDKTQEEEGEDGNGDN) is disordered. Residues 49-71 (YTCSFCRREFRSAQALGGHMNVH) form a C2H2-type zinc finger. A Nuclear localization signal motif is present at residues 72–79 (RRDRAKLR). The segment at 89-130 (HHHTPIANPNPNFSSSSSSSTTTAHLEPSLTNQRSKTTPFPS) is disordered. Over residues 102 to 111 (SSSSSSSTTT) the composition is skewed to low complexity. The segment covering 117–128 (SLTNQRSKTTPF) has biased composition (polar residues).

As to expression, expressed in roots, stems, axillary buds and flowers.

Its subcellular location is the nucleus. Its function is as follows. Probable transcription factor that may regulate cell division and growth. The chain is Zinc finger protein 11 from Arabidopsis thaliana (Mouse-ear cress).